The chain runs to 672 residues: MNKDHGCGHICKEAPRGSVACECRPGFELAKNQKDCICKYELSISEVGTAYTEVRKTTTGTATGIATGTCTGTGRVKATGRGTGTDTDTGTVTARATVTARVTGTGTGTATVTETGTAKVTDTGTGTGTAKVTGTAKVTGTGTGTGTGTGTGTGTGTGTGTGTAKVTGTGTDRGTGTGTGTGTGTGTGTGTGTAKVTGTAKVTGTGTGTAKVTGTGTGTGTGTGTGTGTGTDTGTGTAKVTGTGTGTGTGTGTGTGTGTGTGTGTAKVTGTGTDRGTGTGTGTGTGTGTGTGTGTGTAKVTGTGTGTGTGTGTGTGTGTGTGTGTGTGTGSGSGTGTGTGTGSGSGTGTGTGSGSGTAKVTGTATGTGTGTDTGTGTGTGTGTGTGSGSGTAKVTGTATTTATVTETGTAKVTGTDTGTAKVTGTGTGTGTGTGTGTGTGTGTGTGTGTGTGTGTGTGTGTGTGTGSGSGTAKVTGTDTGTAKVTGTGTGTGTGTGTGTGTGTGTGTGTGSGSGSGSGSGSGSGTGTGTGLGSGSGSGTAKVTGTGTAKVTGTGTGTGTGTGSGSGSGSGSGSGSGSGSGSGSGTGTGTGLGSGSGSGSGTGTGTGTGTGTGTGTGTGTSTVTVRGTGTGTATATGTGTGTGTGTGTGTGTGTGTDTSTGTDRGTGTGTGTA.

7 stretches are compositionally biased toward gly residues: residues 141–161 (TGTGTGTGTGTGTGTGTGTGT), 171–191 (TDRGTGTGTGTGTGTGTGTGT), 215–233 (TGTGTGTGTGTGTGTGTDT), 243–263 (TGTGTGTGTGTGTGTGTGTGT), 273–295 (TDRGTGTGTGTGTGTGTGTGTGT), 303–355 (TGTG…GSGS), and 365–389 (TGTGTGTDTGTGTGTGTGTGTGSGS). Disordered regions lie at residues 141 to 193 (TGTG…GTGT) and 213 to 672 (TGTG…TGTA). Residues 390 to 424 (GTAKVTGTATTTATVTETGTAKVTGTDTGTAKVTG) show a composition bias toward low complexity. Over residues 425–469 (TGTGTGTGTGTGTGTGTGTGTGTGTGTGTGTGTGTGTGTGTGSGS) the composition is skewed to gly residues. Low complexity predominate over residues 470-486 (GTAKVTGTDTGTAKVTG). The segment covering 487–537 (TGTGTGTGTGTGTGTGTGTGTGTGSGSGSGSGSGSGSGTGTGTGLGSGSGS) has biased composition (gly residues). Residues 538 to 552 (GTAKVTGTGTAKVTG) show a composition bias toward low complexity. A compositionally biased stretch (gly residues) spans 553-617 (TGTGTGTGTG…GTGTGTGTGT (65 aa)). Low complexity predominate over residues 618–636 (GTSTVTVRGTGTGTATATG). Gly residues-rich tracts occupy residues 637–653 (TGTGTGTGTGTGTGTGT) and 663–672 (RGTGTGTGTA).

The protein is Putative per-hexamer repeat protein 5 (Phxr5) of Mus musculus (Mouse).